A 674-amino-acid chain; its full sequence is Tripartite terminase subunit 3 (674 aa).

The Walker A motif signature appears at 212 to 219 (VPRRHGKT). A Walker B motif motif is present at residues 305–310 (LLLVDE). Catalysis depends on glutamate 310, which acts as the For ATPase activity. Active-site for nuclease activity residues include aspartate 463, glutamate 534, and aspartate 651.

The protein belongs to the herpesviridae TRM3 protein family. As to quaternary structure, interacts with the terminase subunits TRM1 and TRM2. Interacts with portal protein.

It localises to the host nucleus. In terms of biological role, component of the molecular motor that translocates viral genomic DNA in empty capsid during DNA packaging. Forms a tripartite terminase complex together with TRM1 and TRM2 in the host cytoplasm. Once the complex reaches the host nucleus, it interacts with the capsid portal vertex. This portal forms a ring in which genomic DNA is translocated into the capsid. TRM3 carries an RNase H-like nuclease activity that plays an important role for the cleavage of concatemeric viral DNA into unit length genomes. This chain is Tripartite terminase subunit 3, found in Homo sapiens (Human).